The chain runs to 459 residues: uncharacterized protein (459 aa).

In terms of domain architecture, TRAM spans 6-64; sequence KNKQEKNIIITIKRLGINGEGIGYYKKKIIFIPGALPNEVVVAKIVDRHPHYLEGELVR. S-adenosyl-L-methionine-binding residues include Gln289, Tyr318, Glu339, and Asp387. The active-site Nucleophile is the Cys414.

The protein belongs to the class I-like SAM-binding methyltransferase superfamily. RNA M5U methyltransferase family.

This is an uncharacterized protein from Lactobacillus johnsonii (strain CNCM I-12250 / La1 / NCC 533).